The chain runs to 311 residues: Olfactory receptor 287 (311 aa).

Over 1–27 (MAWSTGQNLSTPGPFILLGFPGPRSMR) the chain is Extracellular. The N-linked (GlcNAc...) asparagine glycan is linked to Asn-8. Residues 28–53 (IGLFLLFLVMYLLTVVGNLAIISLVG) form a helical membrane-spanning segment. Topologically, residues 54–60 (AHRCLQT) are cytoplasmic. The helical transmembrane segment at 61–82 (PMYFFLCNLSFLEIWFTTACVP) threads the bilayer. The Extracellular segment spans residues 83–103 (KTLATFAPRGGVISLAGCATQ). A disulfide bridge connects residues Cys-100 and Cys-192. Residues 104-123 (MYFVFSLGCTEYFLLAVMAY) form a helical membrane-spanning segment. Residues 124–142 (DRYLAICLPLRYGGIMTPG) lie on the Cytoplasmic side of the membrane. A helical transmembrane segment spans residues 143–161 (LAMRLALGSWLCGFSAITV). The Extracellular segment spans residues 162–199 (PATLIARLSFCGSRVINHFFCDISPWIVLSCTDTQVVE). A helical transmembrane segment spans residues 200 to 222 (LVSFGIAFCVILGSCGITLVSYA). The Cytoplasmic segment spans residues 223–239 (YIITTIIKIPSARGRHR). The helical transmembrane segment at 240 to 263 (AFSTCSSHLTVVLIWYGSTIFLHV) threads the bilayer. Residues 264–275 (RTSVESSLDLTK) are Extracellular-facing. The chain crosses the membrane as a helical span at residues 276-295 (AITVLNTIVTPVLNPFIYTL). The Cytoplasmic segment spans residues 296 to 311 (RNKDVKEALRRTVKGK).

The protein belongs to the G-protein coupled receptor 1 family. Olfactory epithelium.

The protein resides in the cell membrane. Its function is as follows. Odorant receptor. The sequence is that of Olfactory receptor 287 (Olr287) from Rattus norvegicus (Rat).